The primary structure comprises 426 residues: Adenylosuccinate synthetase (426 aa).

GTP contacts are provided by residues 18–24 (GDEGKGK) and 46–48 (GHT). The active-site Proton acceptor is Asp19. Positions 19 and 46 each coordinate Mg(2+). IMP contacts are provided by residues 19 to 22 (DEGK), 44 to 47 (NAGH), Thr136, Arg150, Gln222, Thr237, and Arg301. His47 functions as the Proton donor in the catalytic mechanism. Position 297-303 (297-303 (VTTKRKR)) interacts with substrate. Residues Arg303, 329–331 (KID), and 413–415 (GTG) each bind GTP.

Belongs to the adenylosuccinate synthetase family. As to quaternary structure, homodimer. The cofactor is Mg(2+).

It localises to the cytoplasm. It carries out the reaction IMP + L-aspartate + GTP = N(6)-(1,2-dicarboxyethyl)-AMP + GDP + phosphate + 2 H(+). It participates in purine metabolism; AMP biosynthesis via de novo pathway; AMP from IMP: step 1/2. Plays an important role in the de novo pathway and in the salvage pathway of purine nucleotide biosynthesis. Catalyzes the first committed step in the biosynthesis of AMP from IMP. This Schistosoma mansoni (Blood fluke) protein is Adenylosuccinate synthetase.